The primary structure comprises 460 residues: N-myc proto-oncogene protein (460 aa).

An interaction with AURKA region spans residues 19–47 (LEFDSLQPCFYPDEDDFYFGGPDSTPPGE). Residues 61–90 (LSPSRAFSEQSPEPSDWATEMLLPEADLWG) are interaction with AURKA and FBXW7. A 9aaTAD motif is present at residues 76 to 85 (DWATEMLLPE). 3 disordered regions span residues 131-169 (VSEK…GAGR), 221-288 (AAAP…SNSK), and 330-388 (APSP…LERQ). A compositionally biased stretch (low complexity) spans 138–158 (GRGPPAAGPATPGAGAANPAG). A compositionally biased stretch (gly residues) spans 159-169 (RGHGGTAGAGR). Over residues 221-233 (AAAPASAAVAAPP) the composition is skewed to low complexity. A compositionally biased stretch (acidic residues) spans 255–274 (TLSDSDDEDDEEEDEEEEID). Phosphoserine; by CK2 occurs at positions 257 and 259. The region spanning 377-429 (ERRRNHNILERQRRNDLRSSFLTLRDHVPELVKNEKAAKVVILKKATEYVHSL) is the bHLH domain. The leucine-zipper stretch occupies residues 429 to 450 (LQAEEHQLLLEKEKLQARQQQL).

Efficient DNA binding requires dimerization with another bHLH protein. Binds DNA as a heterodimer with MAX. Interacts with KDM5A, KDM5B and HUWE1. Interacts with MYCNOS. Interacts with AURKA; interaction is phospho-independent and triggers AURKA activation; AURKA competes with FBXW7 for binding to unphosphorylated MYCN but not for binding to unphosphorylated MYCN. Interacts with FBXW7; FBXW7 competes with AURKA for binding to unphosphorylated MYCN but not for binding to phosphorylated MYCN. In terms of processing, phosphorylated by GSK3-beta which may promote its degradation. Phosphorylated by AURKA.

Its subcellular location is the nucleus. Positively regulates the transcription of MYCNOS in neuroblastoma cells. This Marmota monax (Woodchuck) protein is N-myc proto-oncogene protein (MYCN).